Here is a 289-residue protein sequence, read N- to C-terminus: Oxaloacetate decarboxylase (289 aa).

Ser-50 provides a ligand contact to substrate. Residue Asp-88 coordinates Mg(2+). Residues Arg-159 and His-235 each coordinate substrate.

This sequence belongs to the isocitrate lyase/PEP mutase superfamily. Oxaloacetate decarboxylase family. As to quaternary structure, homotetramer; dimer of dimers. Requires Mg(2+) as cofactor.

It carries out the reaction oxaloacetate + H(+) = pyruvate + CO2. In terms of biological role, catalyzes the decarboxylation of oxaloacetate into pyruvate. Seems to play a role in maintaining cellular concentrations of bicarbonate and pyruvate. In Pseudomonas syringae pv. tomato (strain ATCC BAA-871 / DC3000), this protein is Oxaloacetate decarboxylase.